The primary structure comprises 453 residues: Alpha-2B adrenergic receptor (453 aa).

Topologically, residues 1 to 17 (MSGPAMVHQEPYSVQAT) are extracellular. The helical transmembrane segment at 18–42 (AAIASAITFLILFTIFGNALVILAV) threads the bilayer. Over 43-54 (LTSRSLRAPQNL) the chain is Cytoplasmic. The helical transmembrane segment at 55–80 (FLVSLAAADILVATLIIPFSLANELL) threads the bilayer. Residues 81 to 90 (GYWYFWRAWC) lie on the Extracellular side of the membrane. Cys-90 and Cys-169 form a disulfide bridge. A helical membrane pass occupies residues 91–113 (EVYLALDVLFCTSSIVHLCAISL). At 114-135 (DRYWAVSRALEYNSKRTPRRIK) the chain is on the cytoplasmic side. A helical membrane pass occupies residues 136–158 (CIILTVWLIAAVISLPPLIYKGD). The Extracellular segment spans residues 159-174 (QRPEPHGLPQCELNQE). A helical membrane pass occupies residues 175-198 (AWYILASSIGSFFAPCLIMILVYL). The Cytoplasmic portion of the chain corresponds to 199-375 (RIYVIAKRSH…LSREKRFTFV (177 aa)). The tract at residues 214–329 (AKRGSGEGES…ASPASVFNPP (116 aa)) is disordered. Acidic residues predominate over residues 303-314 (AEEDEEEVEECE). Residues 376-399 (LAVVIGVFVVCWFPFFFSYSLGAI) form a helical membrane-spanning segment. Residues 400 to 408 (CPQHCKVPH) lie on the Extracellular side of the membrane. A helical transmembrane segment spans residues 409 to 432 (GLFQFFFWIGYCNSSLNPVIYTIF). The Cytoplasmic segment spans residues 433–453 (NQDFRRAFRRILCRQWTQTGW). Cys-445 is lipidated: S-palmitoyl cysteine.

This sequence belongs to the G-protein coupled receptor 1 family. Adrenergic receptor subfamily. ADRA2B sub-subfamily. Interacts with RAB26. Interacts with PPP1R9B. Interacts with GGA1, GGA2 and GGA3.

It is found in the cell membrane. In terms of biological role, alpha-2 adrenergic receptors mediate the catecholamine-induced inhibition of adenylate cyclase through the action of G proteins. The chain is Alpha-2B adrenergic receptor (Adra2b) from Mus musculus (Mouse).